We begin with the raw amino-acid sequence, 171 residues long: Protein GrpE (171 aa).

The segment at 1-22 is disordered; the sequence is MNHEQPDIESQQSAADAAATAG.

It belongs to the GrpE family. In terms of assembly, homodimer.

It is found in the cytoplasm. Functionally, participates actively in the response to hyperosmotic and heat shock by preventing the aggregation of stress-denatured proteins, in association with DnaK and GrpE. It is the nucleotide exchange factor for DnaK and may function as a thermosensor. Unfolded proteins bind initially to DnaJ; upon interaction with the DnaJ-bound protein, DnaK hydrolyzes its bound ATP, resulting in the formation of a stable complex. GrpE releases ADP from DnaK; ATP binding to DnaK triggers the release of the substrate protein, thus completing the reaction cycle. Several rounds of ATP-dependent interactions between DnaJ, DnaK and GrpE are required for fully efficient folding. The polypeptide is Protein GrpE (Stenotrophomonas maltophilia (strain K279a)).